Here is a 302-residue protein sequence, read N- to C-terminus: Meiotic recombination protein rec14 (302 aa).

WD repeat units lie at residues 14-51 (AHQADIYSLNVVAGNLWSASGDSKIKKWSIGDAEHSLV), 57-96 (PHKLGVHHLATSLDENVVVSCGFGQDVYVWNPETNEFRDL), 101-140 (QHPSECWSSCISPDGQTIAFTSVDGRIAVWDNPSDCKISE), 142-184 (DTKG…HVLS), 185-226 (GHTS…GQLR), 227-266 (GHAAWIFAVAFNPVGDLLLSADVEGKIKIWDIDTMECIST), and 269-302 (ETDGAIWAVAWYKNGFIVAGADKSIRWYRAAATE).

Component of the DSB catalytic core (DSBC) complex, composed of at least rec12, rec6 and rec14. The complex interacts with mde2.

Its function is as follows. Required for formation of the rec12-mediated double-strand breaks (DSBs) that initiate meiotic recombination. This is Meiotic recombination protein rec14 from Schizosaccharomyces pombe (strain 972 / ATCC 24843) (Fission yeast).